Here is a 318-residue protein sequence, read N- to C-terminus: Homoserine kinase (318 aa).

Position 97–107 (97–107 (PIGSGLGSSAC)) interacts with ATP.

This sequence belongs to the GHMP kinase family. Homoserine kinase subfamily.

It localises to the cytoplasm. It carries out the reaction L-homoserine + ATP = O-phospho-L-homoserine + ADP + H(+). The protein operates within amino-acid biosynthesis; L-threonine biosynthesis; L-threonine from L-aspartate: step 4/5. In terms of biological role, catalyzes the ATP-dependent phosphorylation of L-homoserine to L-homoserine phosphate. The polypeptide is Homoserine kinase (Aliivibrio fischeri (strain ATCC 700601 / ES114) (Vibrio fischeri)).